Consider the following 263-residue polypeptide: 3-methyl-2-oxobutanoate hydroxymethyltransferase (263 aa).

The Mg(2+) site is built by aspartate 43 and aspartate 82. Residues 43-44 (DS), aspartate 82, and lysine 111 contribute to the 3-methyl-2-oxobutanoate site. Glutamate 113 contacts Mg(2+). The active-site Proton acceptor is the glutamate 179.

This sequence belongs to the PanB family. As to quaternary structure, homodecamer; pentamer of dimers. Requires Mg(2+) as cofactor.

It localises to the cytoplasm. The catalysed reaction is 3-methyl-2-oxobutanoate + (6R)-5,10-methylene-5,6,7,8-tetrahydrofolate + H2O = 2-dehydropantoate + (6S)-5,6,7,8-tetrahydrofolate. The protein operates within cofactor biosynthesis; (R)-pantothenate biosynthesis; (R)-pantoate from 3-methyl-2-oxobutanoate: step 1/2. Its function is as follows. Catalyzes the reversible reaction in which hydroxymethyl group from 5,10-methylenetetrahydrofolate is transferred onto alpha-ketoisovalerate to form ketopantoate. The chain is 3-methyl-2-oxobutanoate hydroxymethyltransferase from Neisseria meningitidis serogroup B (strain ATCC BAA-335 / MC58).